The following is a 549-amino-acid chain: Antagonist of mitotic exit network protein 1 (549 aa).

Over residues 1 to 11 (MKLERVSSNGS) the composition is skewed to polar residues. A disordered region spans residues 1-39 (MKLERVSSNGSFKRGRDIQSLESPCTRPLKKMSPSPSFT).

It belongs to the AMN1 family. Interacts with TEM1.

The protein localises to the cytoplasm. The protein resides in the nucleus. Functionally, negative regulator of the mitotic exit network (MEN), required for multiple cell cycle checkpoints. Acts in the daughter cell to inhibit the mitotic exit pathway once MEN has executed its function. Through its binding ability to TEM1, interferes with the TEM1-CDC5 association, required for CDC5 kinase activation and MEN activation. Required for daughter cell separation and chromosome stability. Involved in copper sensitivity. This chain is Antagonist of mitotic exit network protein 1 (AMN1), found in Saccharomyces cerevisiae (strain ATCC 204508 / S288c) (Baker's yeast).